A 124-amino-acid polypeptide reads, in one-letter code: Iron-sulfur cluster insertion protein ErpA (124 aa).

C52, C116, and C118 together coordinate iron-sulfur cluster.

It belongs to the HesB/IscA family. As to quaternary structure, homodimer. Iron-sulfur cluster is required as a cofactor.

Required for insertion of 4Fe-4S clusters for at least IspG. This is Iron-sulfur cluster insertion protein ErpA from Vibrio atlanticus (strain LGP32) (Vibrio splendidus (strain Mel32)).